A 485-amino-acid chain; its full sequence is Glycogen synthase (485 aa).

Lysine 15 is an ADP-alpha-D-glucose binding site.

This sequence belongs to the glycosyltransferase 1 family. Bacterial/plant glycogen synthase subfamily.

The enzyme catalyses [(1-&gt;4)-alpha-D-glucosyl](n) + ADP-alpha-D-glucose = [(1-&gt;4)-alpha-D-glucosyl](n+1) + ADP + H(+). It participates in glycan biosynthesis; glycogen biosynthesis. Its function is as follows. Synthesizes alpha-1,4-glucan chains using ADP-glucose. The protein is Glycogen synthase of Francisella philomiragia subsp. philomiragia (strain ATCC 25017 / CCUG 19701 / FSC 153 / O#319-036).